Here is a 314-residue protein sequence, read N- to C-terminus: MATLVSPPNFCAKEDAEALRKSVKGWGTNEKAIISILGHRNAGQRKEIRAAYEQLYQEDLLKPLESELSGDFEKAVYRWTLDPADRDAVLANVAIKKSTDVYNVIIEISCIHSPEELLAVRRAYQLRYKHSVEEDLAAHTTGDIRKLLVALVTAYRYDGHEINAKLANSEADILHDAIKDKAFNHEEIIRILSTRSKTQLMATFNKYRDDQGISISKNLLEEGANDFQKALHTAIRCLNDPKKYFEKVLRNAIKRVGTDEDALTRVIVTRAERDLRDIKEVYYKKNSVPLEQAVAKDTSGDYKAFLLTLLGKED.

Annexin repeat units follow at residues 10–81, 82–153, 165–236, and 240–311; these read FCAK…RWTL, DPAD…ALVT, KLAN…TAIR, and DPKK…TLLG. Positions 25, 27, and 67 each coordinate Ca(2+). 5 residues coordinate Ca(2+): I253, R255, G257, D297, and T298.

Belongs to the annexin (TC 1.A.31.1) family. Predominantly in developing fruit.

In Fragaria ananassa (Strawberry), this protein is Annexin-like protein RJ4.